We begin with the raw amino-acid sequence, 365 residues long: Phosphoserine aminotransferase (365 aa).

Arginine 40 contributes to the L-glutamate binding site. Residues 74-75, phenylalanine 99, threonine 155, aspartate 177, and glutamine 200 each bind pyridoxal 5'-phosphate; that span reads AS. Residue lysine 201 is modified to N6-(pyridoxal phosphate)lysine. 241-242 contacts pyridoxal 5'-phosphate; sequence NT.

The protein belongs to the class-V pyridoxal-phosphate-dependent aminotransferase family. SerC subfamily. Homodimer. It depends on pyridoxal 5'-phosphate as a cofactor.

The protein localises to the cytoplasm. The enzyme catalyses O-phospho-L-serine + 2-oxoglutarate = 3-phosphooxypyruvate + L-glutamate. It carries out the reaction 4-(phosphooxy)-L-threonine + 2-oxoglutarate = (R)-3-hydroxy-2-oxo-4-phosphooxybutanoate + L-glutamate. It participates in amino-acid biosynthesis; L-serine biosynthesis; L-serine from 3-phospho-D-glycerate: step 2/3. Functionally, catalyzes the reversible conversion of 3-phosphohydroxypyruvate to phosphoserine and of 3-hydroxy-2-oxo-4-phosphonooxybutanoate to phosphohydroxythreonine. The protein is Phosphoserine aminotransferase of Lactococcus lactis subsp. cremoris (strain SK11).